The sequence spans 200 residues: Small ribosomal subunit protein uS4 (200 aa).

Residues 22–42 are disordered; that stretch reads TGKELQKRPYPPGQHGPGQRR. Positions 92–152 constitute an S4 RNA-binding domain; that stretch reads SRLDNLVYRL…EKSRNLQVIK (61 aa).

The protein belongs to the universal ribosomal protein uS4 family. In terms of assembly, part of the 30S ribosomal subunit. Contacts protein S5. The interaction surface between S4 and S5 is involved in control of translational fidelity.

In terms of biological role, one of the primary rRNA binding proteins, it binds directly to 16S rRNA where it nucleates assembly of the body of the 30S subunit. With S5 and S12 plays an important role in translational accuracy. The protein is Small ribosomal subunit protein uS4 (rpsD) of Geobacillus stearothermophilus (Bacillus stearothermophilus).